The chain runs to 411 residues: Receptor GIN3 (411 aa).

Residues 1–99 (MSGFVAGEEA…LLPILPHPRN (99 aa)) lie on the Extracellular side of the membrane. A helical transmembrane segment spans residues 100–120 (IPIIVPLFCVFTVMTSLAVGL). The Cytoplasmic segment spans residues 121–134 (RLWSRQKVAGGIRS). Residues 135 to 155 (FDWLALAGFGLTIIYGAVSVY) form a helical membrane-spanning segment. Residues 156–181 (HSKVSGPYQAFYDRTWDQMKENYKVY) are Extracellular-facing. The helical transmembrane segment at 182–202 (LVLTIMYPFIMGLIKISLLLF) threads the bilayer. The Cytoplasmic segment spans residues 203–227 (YYRVATLNYVQWAVYATGSLTIANS). The chain crosses the membrane as a helical span at residues 228–248 (IAAIITHCLAFMPIDFWNHFL). At 249–262 (QSPFKFNSRTPMLV) the chain is on the extracellular side. The helical transmembrane segment at 263-283 (FGAVYILTDVAILIIPMPMVF) threads the bilayer. At 284–292 (QLKLYPREK) the chain is on the cytoplasmic side. A helical transmembrane segment spans residues 293-313 (VIAVIAFSLGGVACVASGFRI). Residues 314 to 328 (WAIDEFQNYSGKNSS) lie on the Extracellular side of the membrane. 2 N-linked (GlcNAc...) asparagine glycosylation sites follow: Asn-321 and Asn-326. Residues 329–349 (GLMIDAWTMIELNLTLICASA) form a helical membrane-spanning segment. At 350 to 411 (PAIRALAIHY…QSPVIPKEVV (62 aa)) the chain is on the cytoplasmic side. The tract at residues 371-411 (FSSSGATRGSKSAGSSGKSKTPESEKSMQVSQSPVIPKEVV) is disordered. Low complexity predominate over residues 372-389 (SSSGATRGSKSAGSSGKS).

The protein belongs to the SAT4 family. As to quaternary structure, interacts with guanine nucleotide-binding protein alpha GPA2; to activate adenylate cyclase and positively regulate nematode trap formation.

Its subcellular location is the cell membrane. In terms of biological role, receptor that senses nematode-derived signals at the cell surface and signals via adenylate cyclase to positively regulate trap formation for nematode capture. This Arthrobotrys oligospora (strain ATCC 24927 / CBS 115.81 / DSM 1491) (Nematode-trapping fungus) protein is Receptor GIN3.